Consider the following 276-residue polypeptide: Ribosomal RNA small subunit methyltransferase A (276 aa).

S-adenosyl-L-methionine contacts are provided by asparagine 27, leucine 29, glycine 54, glutamate 75, aspartate 101, and asparagine 122.

Belongs to the class I-like SAM-binding methyltransferase superfamily. rRNA adenine N(6)-methyltransferase family. RsmA subfamily.

It is found in the cytoplasm. The catalysed reaction is adenosine(1518)/adenosine(1519) in 16S rRNA + 4 S-adenosyl-L-methionine = N(6)-dimethyladenosine(1518)/N(6)-dimethyladenosine(1519) in 16S rRNA + 4 S-adenosyl-L-homocysteine + 4 H(+). In terms of biological role, specifically dimethylates two adjacent adenosines (A1518 and A1519) in the loop of a conserved hairpin near the 3'-end of 16S rRNA in the 30S particle. May play a critical role in biogenesis of 30S subunits. The sequence is that of Ribosomal RNA small subunit methyltransferase A from Brucella abortus biovar 1 (strain 9-941).